The sequence spans 335 residues: Transaldolase (335 aa).

Lys-135 (schiff-base intermediate with substrate) is an active-site residue.

Belongs to the transaldolase family. Type 1 subfamily. As to quaternary structure, homodimer.

It localises to the cytoplasm. It catalyses the reaction D-sedoheptulose 7-phosphate + D-glyceraldehyde 3-phosphate = D-erythrose 4-phosphate + beta-D-fructose 6-phosphate. It functions in the pathway carbohydrate degradation; pentose phosphate pathway; D-glyceraldehyde 3-phosphate and beta-D-fructose 6-phosphate from D-ribose 5-phosphate and D-xylulose 5-phosphate (non-oxidative stage): step 2/3. Transaldolase is important for the balance of metabolites in the pentose-phosphate pathway. In Prochlorococcus marinus (strain SARG / CCMP1375 / SS120), this protein is Transaldolase.